We begin with the raw amino-acid sequence, 65 residues long: Large ribosomal subunit protein bL35 (65 aa).

It belongs to the bacterial ribosomal protein bL35 family.

The sequence is that of Large ribosomal subunit protein bL35 from Parasynechococcus marenigrum (strain WH8102).